A 475-amino-acid polypeptide reads, in one-letter code: Ankyrin repeat, SAM and basic leucine zipper domain-containing protein 1 (475 aa).

A disordered region spans residues 1–24 (MAAAVQRGLPVAGGGESSESEDDG). Residues serine 17, serine 18, and serine 20 each carry the phosphoserine modification. ANK repeat units follow at residues 45–74 (EKNEIFKKALTTGDISLVEELLDSGISVES), 78–107 (YGWTPLMYAASVANVELVRVLLDRGANASF), 110–144 (DKHTVLITACSARGSQEQILKCVELLLSRNADPNV), 148–177 (RLMTPIMYAARDGHPQVVALLVAQGAEVNA), 181–210 (NGYTALTWAARQGHKNVVLKLLELGANKML), and 214–243 (DGKTPSEVANKNKHPEIFSLLSLTLNPLEG). One can recognise an SAM domain in the interval 272-334 (SYAAFGDLEI…KILAALKELA (63 aa)).

Interacts with DDX4, PIWIL1, RANBP9 and TDRD1.

It is found in the cytoplasm. Plays a central role during spermatogenesis by repressing transposable elements and preventing their mobilization, which is essential for the germline integrity. Acts via the piRNA metabolic process, which mediates the repression of transposable elements during meiosis by forming complexes composed of piRNAs and Piwi proteins and governs the methylation and subsequent repression of transposons. Its association with pi-bodies suggests a participation in the primary piRNAs metabolic process. Required prior to the pachytene stage to facilitate the production of multiple types of piRNAs, including those associated with repeats involved in the regulation of retrotransposons. May act by mediating protein-protein interactions during germ cell maturation. In Loxodonta africana (African elephant), this protein is Ankyrin repeat, SAM and basic leucine zipper domain-containing protein 1 (ASZ1).